The following is a 478-amino-acid chain: Proline--tRNA ligase (478 aa).

Belongs to the class-II aminoacyl-tRNA synthetase family. ProS type 3 subfamily. As to quaternary structure, homodimer.

It localises to the cytoplasm. It catalyses the reaction tRNA(Pro) + L-proline + ATP = L-prolyl-tRNA(Pro) + AMP + diphosphate. Catalyzes the attachment of proline to tRNA(Pro) in a two-step reaction: proline is first activated by ATP to form Pro-AMP and then transferred to the acceptor end of tRNA(Pro). The sequence is that of Proline--tRNA ligase from Clostridium botulinum (strain Loch Maree / Type A3).